The sequence spans 990 residues: Tyrosine-protein phosphatase 3 (990 aa).

Disordered stretches follow at residues 47–88, 100–193, 246–414, and 431–452; these read QSQS…SPSV, NKIN…SNIE, PNQQ…SFSQ, and KPEMASKKSHKHHQRHYSHNDL. 2 stretches are compositionally biased toward low complexity: residues 52–88 and 100–117; these read NTNTNNINNSSSNINNNNNNTPDSMSMSTSLSSSPSV and NKINNNTTTNNNNNNNNN. Positions 127–136 are enriched in polar residues; sequence LKLSNTMIIK. Composition is skewed to low complexity over residues 137-191, 250-271, 278-293, 310-327, and 334-413; these read NNNN…SNSN, SSSSSSLSSTTTTTTTTSSSLL, NNSTYNNHHNNNNSSN, QAQVQLQQMQQQMQQHQQ, and NLSS…TSFS. In terms of domain architecture, Tyrosine-protein phosphatase spans 422 to 715; sequence MRLEFEMIKK…IFIFKVINDV (294 aa). The segment covering 437 to 447 has biased composition (basic residues); the sequence is KKSHKHHQRHY. Cys-650 (phosphocysteine intermediate) is an active-site residue. Polar residues predominate over residues 786–795; that stretch reads PPQQQQDNPF. Disordered regions lie at residues 786–814 and 834–990; these read PPQQQQDNPFSKSSIKISPSPLNSTNISI and LQQQ…IKCF. Low complexity-rich tracts occupy residues 796 to 806 and 834 to 850; these read SKSSIKISPSP and LQQQQQQSSQQLNDNPP. Residues 851–868 show a composition bias toward polar residues; the sequence is LNMSSNSIKFPPVTSLSS. Composition is skewed to low complexity over residues 878-916 and 924-968; these read NDNNNKQQQQQQQQQQKNNQQCSGFSHFLNNNNNNDNNG and GSFL…SDNN.

This sequence belongs to the protein-tyrosine phosphatase family. Non-receptor class subfamily. In the anterior-like and prestalk cell types.

Its subcellular location is the cytoplasm. It catalyses the reaction O-phospho-L-tyrosyl-[protein] + H2O = L-tyrosyl-[protein] + phosphate. In terms of biological role, seems to dephosphorylate a protein of 130 kDa (p130). This chain is Tyrosine-protein phosphatase 3 (ptpC), found in Dictyostelium discoideum (Social amoeba).